The primary structure comprises 331 residues: Beta-ketoacyl-[acyl-carrier-protein] synthase III (331 aa).

Catalysis depends on residues Cys113 and His253. Positions Gln254–Arg258 are ACP-binding. Asn283 is an active-site residue.

It belongs to the thiolase-like superfamily. FabH family. As to quaternary structure, homodimer.

It is found in the cytoplasm. The enzyme catalyses malonyl-[ACP] + acetyl-CoA + H(+) = 3-oxobutanoyl-[ACP] + CO2 + CoA. Its pathway is lipid metabolism; fatty acid biosynthesis. Functionally, catalyzes the condensation reaction of fatty acid synthesis by the addition to an acyl acceptor of two carbons from malonyl-ACP. Catalyzes the first condensation reaction which initiates fatty acid synthesis and may therefore play a role in governing the total rate of fatty acid production. Possesses both acetoacetyl-ACP synthase and acetyl transacylase activities. Its substrate specificity determines the biosynthesis of branched-chain and/or straight-chain of fatty acids. The chain is Beta-ketoacyl-[acyl-carrier-protein] synthase III from Desulfitobacterium hafniense (strain DSM 10664 / DCB-2).